The primary structure comprises 125 residues: MIYGIGTDIVSLKRIIRLNKKFGQAFAGRILTPEELLEFPQAGKPVNYLAKRFAAKEAFAKAVGTGIRGAVSFRNIGIGHDALGKPEFFYGPALSKWLEEQGISRVSLSMSDEEDTVLAFVVAEK.

Aspartate 8 and glutamate 57 together coordinate Mg(2+).

Belongs to the P-Pant transferase superfamily. AcpS family. Mg(2+) serves as cofactor.

It localises to the cytoplasm. It carries out the reaction apo-[ACP] + CoA = holo-[ACP] + adenosine 3',5'-bisphosphate + H(+). In terms of biological role, transfers the 4'-phosphopantetheine moiety from coenzyme A to a Ser of acyl-carrier-protein. In Neisseria meningitidis serogroup C (strain 053442), this protein is Holo-[acyl-carrier-protein] synthase.